A 157-amino-acid polypeptide reads, in one-letter code: SsrA-binding protein (157 aa).

Residues 131-157 are disordered; sequence KQLHDKRDTEKKRDWSREKGRIMRARG. A compositionally biased stretch (basic and acidic residues) spans 132 to 151; that stretch reads QLHDKRDTEKKRDWSREKGR.

This sequence belongs to the SmpB family.

It is found in the cytoplasm. Its function is as follows. Required for rescue of stalled ribosomes mediated by trans-translation. Binds to transfer-messenger RNA (tmRNA), required for stable association of tmRNA with ribosomes. tmRNA and SmpB together mimic tRNA shape, replacing the anticodon stem-loop with SmpB. tmRNA is encoded by the ssrA gene; the 2 termini fold to resemble tRNA(Ala) and it encodes a 'tag peptide', a short internal open reading frame. During trans-translation Ala-aminoacylated tmRNA acts like a tRNA, entering the A-site of stalled ribosomes, displacing the stalled mRNA. The ribosome then switches to translate the ORF on the tmRNA; the nascent peptide is terminated with the 'tag peptide' encoded by the tmRNA and targeted for degradation. The ribosome is freed to recommence translation, which seems to be the essential function of trans-translation. This is SsrA-binding protein from Rhodopseudomonas palustris (strain BisB18).